Reading from the N-terminus, the 196-residue chain is Pyridoxal 5'-phosphate synthase subunit PdxT (196 aa).

Residue 47–49 coordinates L-glutamine; sequence GES. Cys-79 (nucleophile) is an active-site residue. L-glutamine-binding positions include Arg-106 and 134 to 135; that span reads IR. Active-site charge relay system residues include His-170 and Glu-172.

This sequence belongs to the glutaminase PdxT/SNO family. As to quaternary structure, in the presence of PdxS, forms a dodecamer of heterodimers. Only shows activity in the heterodimer.

The enzyme catalyses aldehydo-D-ribose 5-phosphate + D-glyceraldehyde 3-phosphate + L-glutamine = pyridoxal 5'-phosphate + L-glutamate + phosphate + 3 H2O + H(+). It carries out the reaction L-glutamine + H2O = L-glutamate + NH4(+). It participates in cofactor biosynthesis; pyridoxal 5'-phosphate biosynthesis. Its function is as follows. Catalyzes the hydrolysis of glutamine to glutamate and ammonia as part of the biosynthesis of pyridoxal 5'-phosphate. The resulting ammonia molecule is channeled to the active site of PdxS. The polypeptide is Pyridoxal 5'-phosphate synthase subunit PdxT (Bacillus cereus (strain B4264)).